A 546-amino-acid polypeptide reads, in one-letter code: ATP synthase subunit alpha (546 aa).

An ATP-binding site is contributed by 172–179 (GDRKTGKT).

It belongs to the ATPase alpha/beta chains family. In terms of assembly, F-type ATPases have 2 components, CF(1) - the catalytic core - and CF(0) - the membrane proton channel. CF(1) has five subunits: alpha(3), beta(3), gamma(1), delta(1), epsilon(1). CF(0) has three main subunits: a(1), b(2) and c(9-12). The alpha and beta chains form an alternating ring which encloses part of the gamma chain. CF(1) is attached to CF(0) by a central stalk formed by the gamma and epsilon chains, while a peripheral stalk is formed by the delta and b chains.

It localises to the cell membrane. The catalysed reaction is ATP + H2O + 4 H(+)(in) = ADP + phosphate + 5 H(+)(out). In terms of biological role, produces ATP from ADP in the presence of a proton gradient across the membrane. The alpha chain is a regulatory subunit. The protein is ATP synthase subunit alpha of Corynebacterium efficiens (strain DSM 44549 / YS-314 / AJ 12310 / JCM 11189 / NBRC 100395).